Consider the following 210-residue polypeptide: Large ribosomal subunit protein uL3 (210 aa).

This sequence belongs to the universal ribosomal protein uL3 family. As to quaternary structure, part of the 50S ribosomal subunit. Forms a cluster with proteins L14 and L19.

In terms of biological role, one of the primary rRNA binding proteins, it binds directly near the 3'-end of the 23S rRNA, where it nucleates assembly of the 50S subunit. The sequence is that of Large ribosomal subunit protein uL3 from Lawsonia intracellularis (strain PHE/MN1-00).